We begin with the raw amino-acid sequence, 208 residues long: Outer-membrane lipoprotein LolB (208 aa).

The signal sequence occupies residues Met1 to Ala21. Cys22 carries N-palmitoyl cysteine lipidation. Cys22 is lipidated: S-diacylglycerol cysteine.

The protein belongs to the LolB family. In terms of assembly, monomer.

It localises to the cell outer membrane. Its function is as follows. Plays a critical role in the incorporation of lipoproteins in the outer membrane after they are released by the LolA protein. This is Outer-membrane lipoprotein LolB from Erwinia tasmaniensis (strain DSM 17950 / CFBP 7177 / CIP 109463 / NCPPB 4357 / Et1/99).